A 141-amino-acid chain; its full sequence is SsrA-binding protein (141 aa).

The protein belongs to the SmpB family.

The protein resides in the cytoplasm. Functionally, required for rescue of stalled ribosomes mediated by trans-translation. Binds to transfer-messenger RNA (tmRNA), required for stable association of tmRNA with ribosomes. tmRNA and SmpB together mimic tRNA shape, replacing the anticodon stem-loop with SmpB. tmRNA is encoded by the ssrA gene; the 2 termini fold to resemble tRNA(Ala) and it encodes a 'tag peptide', a short internal open reading frame. During trans-translation Ala-aminoacylated tmRNA acts like a tRNA, entering the A-site of stalled ribosomes, displacing the stalled mRNA. The ribosome then switches to translate the ORF on the tmRNA; the nascent peptide is terminated with the 'tag peptide' encoded by the tmRNA and targeted for degradation. The ribosome is freed to recommence translation, which seems to be the essential function of trans-translation. The protein is SsrA-binding protein of Ureaplasma parvum serovar 3 (strain ATCC 27815 / 27 / NCTC 11736).